The following is a 146-amino-acid chain: uncharacterized protein (146 aa).

Residues 7–146 enclose the N-acetyltransferase domain; sequence LEINYKTDEL…EGHDVLLWKP (140 aa).

This is an uncharacterized protein from Staphylococcus aureus (strain COL).